The primary structure comprises 492 residues: Solute carrier family 2, facilitated glucose transporter member 1 (492 aa).

Met1 is subject to N-acetylmethionine. Over 1–11 the chain is Cytoplasmic; that stretch reads MEPSSKKVTGR. A helical membrane pass occupies residues 12 to 33; sequence LMLAVGGAVLGSLQFGYNTGVI. The Extracellular portion of the chain corresponds to 34–66; it reads NAPQKVIEEFYNQTWNHRYGESIPSTTLTTLWS. Asn45 carries an N-linked (GlcNAc...) asparagine glycan. The chain crosses the membrane as a helical span at residues 67–87; that stretch reads LSVAIFSVGGMIGSFSVGLFV. The Cytoplasmic segment spans residues 88–90; that stretch reads NRF. The chain crosses the membrane as a helical span at residues 91 to 112; it reads GRRNSMLMMNLLAFVSAVLMGF. The Extracellular segment spans residues 113–120; the sequence is SKLGKSFE. A helical membrane pass occupies residues 121–144; that stretch reads MLILGRFIIGVYCGLTTGFVPMYV. Topologically, residues 145–155 are cytoplasmic; that stretch reads GEVSPTALRGA. Residues 156 to 176 traverse the membrane as a helical segment; it reads LGTLHQLGIVVGILIAQVFGL. Gln161 lines the D-glucose pocket. Over 177 to 185 the chain is Extracellular; it reads DSIMGNADL. Residues 186-206 traverse the membrane as a helical segment; it reads WPLLLSVIFIPALLQCILLPF. Residues 207–271 lie on the Cytoplasmic side of the membrane; it reads CPESPRFLLI…LFRSPAYRQP (65 aa). Ser226 bears the Phosphoserine mark. Residues 272 to 293 form a helical membrane-spanning segment; it reads ILIAVVLQLSQQLSGINAVFYY. D-glucose contacts are provided by residues 282 to 283 and Asn288; that span reads QQ. Residues 294–306 are Extracellular-facing; it reads STSIFEKAGVQQP. A helical transmembrane segment spans residues 307–328; it reads VYATIGSGIVNTAFTVVSLFVV. Position 317 (Asn317) interacts with D-glucose. Topologically, residues 329–334 are cytoplasmic; that stretch reads ERAGRR. Residues 335–355 form a helical membrane-spanning segment; sequence TLHLIGLAGMAGCAVLMTIAL. Residues 356 to 365 are Extracellular-facing; the sequence is ALLEQLPWMS. A helical transmembrane segment spans residues 366–388; that stretch reads YLSIVAIFGFVAFFEVGPGPIPW. D-glucose contacts are provided by Glu380 and Trp388. The Cytoplasmic segment spans residues 389–401; sequence FIVAELFSQGPRP. A helical membrane pass occupies residues 402–422; that stretch reads AAVAVAGFSNWTSNFIVGMCF. Residues 423-429 are Extracellular-facing; that stretch reads QYVEQLC. Residues 430–450 traverse the membrane as a helical segment; it reads GPYVFIIFTVLLVLFFIFTYF. Topologically, residues 451–492 are cytoplasmic; sequence KVPETKGRTFDEIASGFRQGGASQSDKTPEELFHPLGADSQV. Ser465 is subject to Phosphoserine. The segment at 468–492 is disordered; it reads RQGGASQSDKTPEELFHPLGADSQV. Thr478 carries the phosphothreonine modification. Ser490 carries the phosphoserine modification.

This sequence belongs to the major facilitator superfamily. Sugar transporter (TC 2.A.1.1) family. Glucose transporter subfamily. Found in a complex with ADD2, DMTN and SLC2A1. Interacts (via C-terminus cytoplasmic region) with DMTN. Interacts with SNX27; the interaction is required when endocytosed to prevent degradation in lysosomes and promote recycling to the plasma membrane. Interacts with STOM. Interacts with GIPC (via PDZ domain). Interacts with SGTA (via Gln-rich region). Interacts with isoform 1 of BSG. Interacts with SMIM43; the interaction may promote SLC2A1-mediated glucose transport to meet the energy needs of mesendoderm differentiation. Post-translationally, phosphorylation at Ser-226 by PKC promotes glucose uptake by increasing cell membrane localization. In terms of tissue distribution, detected in osteoblastic cells (at protein level). Detected in brain, and at lower levels in kidney, heart and lung.

It is found in the cell membrane. It localises to the photoreceptor inner segment. The catalysed reaction is D-glucose(out) = D-glucose(in). With respect to regulation, the uptake of glucose is inhibited by cytochalasin B. Glucose uptake is increased in response to phorbol ester 12-O-tetradecanoylphorbol-13-acetate (TPA) treatment: TPA-induced glucose uptake requires phosphorylation at Ser-226. Functionally, facilitative glucose transporter, which is responsible for constitutive or basal glucose uptake. Has a very broad substrate specificity; can transport a wide range of aldoses including both pentoses and hexoses. Most important energy carrier of the brain: present at the blood-brain barrier and assures the energy-independent, facilitative transport of glucose into the brain. In association with BSG and NXNL1, promotes retinal cone survival by increasing glucose uptake into photoreceptors. Required for mesendoderm differentiation. The chain is Solute carrier family 2, facilitated glucose transporter member 1 from Rattus norvegicus (Rat).